The following is a 475-amino-acid chain: Squamosa promoter-binding-like protein 12 (475 aa).

Residues Asn-49 to Ser-73 are disordered. The segment covering Gly-51–Ser-73 has biased composition (low complexity). The SBP-type zinc-finger motif lies at Ser-177–Pro-254. Zn(2+)-binding residues include Cys-180, Cys-185, Cys-202, His-205, Cys-221, Cys-224, His-228, and Cys-240. The Bipartite nuclear localization signal motif lies at Lys-237–Lys-253. A disordered region spans residues Gly-437 to His-475. The span at Asn-465–His-475 shows a compositional bias: polar residues.

Expressed in young panicles.

The protein resides in the nucleus. Its function is as follows. Trans-acting factor that binds specifically to the consensus nucleotide sequence 5'-TNCGTACAA-3'. May be involved in panicle development. This is Squamosa promoter-binding-like protein 12 (SPL12) from Oryza sativa subsp. japonica (Rice).